We begin with the raw amino-acid sequence, 345 residues long: Dihydroorotase (345 aa).

Residues His14 and His16 each coordinate Zn(2+). Residues 16-18 (HLR) and Asn42 each bind substrate. The Zn(2+) site is built by Lys100, His137, and His175. Lys100 is subject to N6-carboxylysine. His137 serves as a coordination point for substrate. Leu220 contributes to the substrate binding site. Asp248 is a binding site for Zn(2+). The active site involves Asp248. 2 residues coordinate substrate: His252 and Ala264.

It belongs to the metallo-dependent hydrolases superfamily. DHOase family. Class II DHOase subfamily. In terms of assembly, homodimer. Zn(2+) is required as a cofactor.

It catalyses the reaction (S)-dihydroorotate + H2O = N-carbamoyl-L-aspartate + H(+). It participates in pyrimidine metabolism; UMP biosynthesis via de novo pathway; (S)-dihydroorotate from bicarbonate: step 3/3. Its function is as follows. Catalyzes the reversible cyclization of carbamoyl aspartate to dihydroorotate. The polypeptide is Dihydroorotase (Methylobacillus flagellatus (strain ATCC 51484 / DSM 6875 / VKM B-1610 / KT)).